A 280-amino-acid chain; its full sequence is Release factor glutamine methyltransferase (280 aa).

Residues 120–124 (GTGSG), Asp-143, and Asn-186 each bind S-adenosyl-L-methionine. A substrate-binding site is contributed by 186 to 189 (NPPY).

It belongs to the protein N5-glutamine methyltransferase family. PrmC subfamily.

The enzyme catalyses L-glutaminyl-[peptide chain release factor] + S-adenosyl-L-methionine = N(5)-methyl-L-glutaminyl-[peptide chain release factor] + S-adenosyl-L-homocysteine + H(+). Its function is as follows. Methylates the class 1 translation termination release factors RF1/PrfA and RF2/PrfB on the glutamine residue of the universally conserved GGQ motif. This chain is Release factor glutamine methyltransferase, found in Koribacter versatilis (strain Ellin345).